Consider the following 614-residue polypeptide: Probable glutamate--tRNA ligase, cytoplasmic (614 aa).

130 to 132 is a binding site for L-glutamate; sequence RFA. Positions 135 to 144 match the 'HIGH' region motif; that stretch reads PSGCLHIGHL. An ATP-binding site is contributed by H140. L-glutamate contacts are provided by residues D166, 303–307, and R321; that span reads YDFVC. Residues E324 and 359–363 each bind ATP; that span reads VLSKR. A 'KMSKS' region motif is present at residues 359–363; sequence VLSKR.

The protein belongs to the class-I aminoacyl-tRNA synthetase family. Glutamate--tRNA ligase type 2 subfamily.

The protein localises to the cytoplasm. The catalysed reaction is tRNA(Glu) + L-glutamate + ATP = L-glutamyl-tRNA(Glu) + AMP + diphosphate. This chain is Probable glutamate--tRNA ligase, cytoplasmic, found in Vairimorpha ceranae (strain BRL01) (Microsporidian parasite).